Here is a 520-residue protein sequence, read N- to C-terminus: Putative lipase ATG15 (520 aa).

Residues 1–14 (MLHKSPSRKRFASP) are Cytoplasmic-facing. Residues 15-35 (LHLGCILTLTVLCLIAYYFAL) traverse the membrane as a helical; Signal-anchor for type II membrane protein segment. Residues 36-520 (PDYLSVGKSS…WLGFCTKYEL (485 aa)) lie on the Lumenal side of the membrane. 3 N-linked (GlcNAc...) asparagine glycosylation sites follow: Asn173, Asn202, and Asn208. Ser332 serves as the catalytic Charge relay system.

The protein belongs to the AB hydrolase superfamily. Lipase family. As to quaternary structure, binds to both phosphatidylinositol (PI) and phosphatidylinositol 3,5-bisphosphate (PIP2).

It is found in the endosome. The protein localises to the multivesicular body membrane. Its subcellular location is the prevacuolar compartment membrane. The catalysed reaction is a triacylglycerol + H2O = a diacylglycerol + a fatty acid + H(+). In terms of biological role, lipase which is essential for lysis of subvacuolar cytoplasm to vacuole targeted bodies and intravacuolar autophagic bodies. Involved in the lysis of intravacuolar multivesicular body (MVB) vesicles. The intravacuolar membrane disintegration by ATG15 is critical to life span extension. This is Putative lipase ATG15 (ATG15) from Saccharomyces cerevisiae (strain YJM789) (Baker's yeast).